Reading from the N-terminus, the 249-residue chain is ATP synthase subunit a, chloroplastic (249 aa).

The next 5 membrane-spanning stretches (helical) occupy residues 40–60 (QVLI…VLVV), 97–117 (VPFI…GALL), 136–156 (INTT…AGLS), 201–221 (LVVV…VMFL), and 222–242 (GLFT…AYIG).

It belongs to the ATPase A chain family. As to quaternary structure, F-type ATPases have 2 components, CF(1) - the catalytic core - and CF(0) - the membrane proton channel. CF(1) has five subunits: alpha(3), beta(3), gamma(1), delta(1), epsilon(1). CF(0) has four main subunits: a, b, b' and c.

It is found in the plastid. It localises to the chloroplast thylakoid membrane. In terms of biological role, key component of the proton channel; it plays a direct role in the translocation of protons across the membrane. The polypeptide is ATP synthase subunit a, chloroplastic (Aethionema grandiflorum (Persian stone-cress)).